The following is a 234-amino-acid chain: Small ribosomal subunit protein uS10m (234 aa).

Residues 1-23 (MLRIGYRGFSTRSRVFKLSPQEY) constitute a mitochondrion transit peptide.

It belongs to the universal ribosomal protein uS10 family. As to quaternary structure, component of the mitochondrial small ribosomal subunit (mt-SSU).

The protein resides in the mitochondrion. Functionally, component of the mitochondrial ribosome (mitoribosome), a dedicated translation machinery responsible for the synthesis of mitochondrial genome-encoded proteins, including at least some of the essential transmembrane subunits of the mitochondrial respiratory chain. The mitoribosomes are attached to the mitochondrial inner membrane and translation products are cotranslationally integrated into the membrane. The sequence is that of Small ribosomal subunit protein uS10m (RSM10) from Candida albicans (strain SC5314 / ATCC MYA-2876) (Yeast).